The following is a 470-amino-acid chain: MTDDGTWSDESDWELGPDDISDAIEEVSAPPPVVAVVGRPNVGKSTLVNRILGRREAVVQDVPGVTRDRVSYDASWSGQRFMVQDTGGWEPDAKGLQQLVAEQASVAMRTADAIIFVVDSVVGATAADEAAAKLLQRSGKPVFLAANKVDNERGEADAAALWSLGLGEPHPISAMHGRGVADLLDAVVDALPTISEVAGAGGGGPRRVALVGKPNVGKSSLLNRLSGDERSVVHDVAGTTVDPVDSLIEMDGKLWRFVDTAGLRRKVGQASGHEFYASVRTHGAIDAAEVAIVLVDASQPLTEQDQRVLSMVVEAGRALVLAFNKWDLVDEDRRYLLDREIDLQLAQLQWAPRVNISAKTGRAVQKLVPALETALKSWDTRVSTGRLNTFFKEIVAATPPPVRGGKQPRILFATQATARPPTFVLFTTGFLEAGYRRFLERRLRETFGFEGSPIRINVRVREKRGPKARR.

2 consecutive EngA-type G domains span residues 32–195 and 206–379; these read PVVA…PTIS and RRVA…KSWD. GTP is bound by residues 38–45, 85–89, 147–150, 212–219, 259–263, and 324–327; these read GRPNVGKS, DTGGW, NKVD, GKPNVGKS, DTAGL, and NKWD. The KH-like domain occupies 380–462; the sequence is TRVSTGRLNT…PIRINVRVRE (83 aa).

This sequence belongs to the TRAFAC class TrmE-Era-EngA-EngB-Septin-like GTPase superfamily. EngA (Der) GTPase family. In terms of assembly, associates with the 50S ribosomal subunit.

In terms of biological role, GTPase that plays an essential role in the late steps of ribosome biogenesis. The protein is GTPase Der of Mycolicibacterium vanbaalenii (strain DSM 7251 / JCM 13017 / BCRC 16820 / KCTC 9966 / NRRL B-24157 / PYR-1) (Mycobacterium vanbaalenii).